A 295-amino-acid chain; its full sequence is Calcium-regulated actin-bundling protein (295 aa).

As to quaternary structure, monomer.

Its function is as follows. May contribute to the structure and reorganization of filopodia and pseudopodia accompanying cell movements. The polypeptide is Calcium-regulated actin-bundling protein (abpB) (Dictyostelium discoideum (Social amoeba)).